A 331-amino-acid chain; its full sequence is FMRFamide-related neuropeptides (331 aa).

Positions 1 to 25 (MRCWSPCSLLVVIVIYCLSSHTSEA) are cleaved as a signal peptide. A propeptide spanning residues 26–65 (FDLAQACVESQRLSLLPICDTIFAVQQEGAQQSADDGMRS) is cleaved from the precursor. 2 positions are modified to phenylalanine amide: phenylalanine 71 and phenylalanine 83. A propeptide spanning residues 86–94 (NVPDLPFED) is cleaved from the precursor. Phenylalanine 100 is modified (phenylalanine amide). Residues 103-168 (AAPQLDDLLK…YIDDVEDSDV (66 aa)) constitute a propeptide that is removed on maturation. A disordered region spans residues 122 to 158 (QKADETSVRRKRSTDAAPQNNAENPEQKNDSAKITKR). The segment covering 146-158 (PEQKNDSAKITKR) has biased composition (basic and acidic residues). 2 positions are modified to phenylalanine amide: phenylalanine 174 and phenylalanine 181. Residues 184–194 (NPSDAGNKLTE) constitute a propeptide that is removed on maturation. Phenylalanine 200 carries the phenylalanine amide modification. Residues 203-205 (DPE) constitute a propeptide that is removed on maturation. The residue at position 211 (phenylalanine 211) is a Phenylalanine amide. Positions 214–216 (SDD) are excised as a propeptide. Phenylalanine 222 is modified (phenylalanine amide). Residues 225-236 (NPSDVEDELEED) constitute a propeptide that is removed on maturation. The residue at position 242 (phenylalanine 242) is a Phenylalanine amide. A propeptide spanning residues 245–254 (GGEDDEEEAE) is cleaved from the precursor. At phenylalanine 260 the chain carries Phenylalanine amide. Positions 263–265 (DPE) are excised as a propeptide. At phenylalanine 271 the chain carries Phenylalanine amide. Positions 274-277 (SGED) are excised as a propeptide. Over residues 282–296 (RFGRNPDEQEADKRF) the composition is skewed to basic and acidic residues. Residues 282–310 (RFGRNPDEQEADKRFMRFGRGGEDDEVST) form a disordered region. Residue phenylalanine 283 is modified to Phenylalanine amide. The propeptide occupies 286–293 (NPDEQEAD). Position 299 is a phenylalanine amide (phenylalanine 299). Positions 302 to 312 (GGEDDEVSTED) are excised as a propeptide. A Phenylalanine amide modification is found at phenylalanine 318. Positions 321 to 331 (SADKCKGCLEG) are excised as a propeptide.

It belongs to the FARP (FMRFamide related peptide) family.

The protein resides in the secreted. Excitatory neurotransmitters that directly modulate chromatophore function by activating chromatophore expansion at the chromatophore neuromuscular junction. The sequence is that of FMRFamide-related neuropeptides from Doryteuthis pealeii (Longfin inshore squid).